The sequence spans 454 residues: NADP-specific glutamate dehydrogenase (454 aa).

Ser2 is modified (N-acetylserine). Residue Lys114 is part of the active site.

Belongs to the Glu/Leu/Phe/Val dehydrogenases family. In terms of assembly, homohexamer.

The enzyme catalyses L-glutamate + NADP(+) + H2O = 2-oxoglutarate + NH4(+) + NADPH + H(+). This is NADP-specific glutamate dehydrogenase (GDH) from Neurospora sitophila (Chrysonilia sitophila).